A 211-amino-acid chain; its full sequence is Dual specificity protein phosphatase 26 (211 aa).

One can recognise a Tyrosine-protein phosphatase domain in the interval 60 to 207; that stretch reads NHADEVWPGL…LLALDRRLRQ (148 aa). Catalysis depends on Cys-152, which acts as the Phosphocysteine intermediate.

It belongs to the protein-tyrosine phosphatase family. Non-receptor class dual specificity subfamily. Interacts with HSF4.

It is found in the cytoplasm. It localises to the nucleus. Its subcellular location is the golgi apparatus. It carries out the reaction O-phospho-L-tyrosyl-[protein] + H2O = L-tyrosyl-[protein] + phosphate. It catalyses the reaction O-phospho-L-seryl-[protein] + H2O = L-seryl-[protein] + phosphate. The enzyme catalyses O-phospho-L-threonyl-[protein] + H2O = L-threonyl-[protein] + phosphate. Inactivates MAPK1 and MAPK3 which leads to dephosphorylation of heat shock factor protein 4 and a reduction in its DNA-binding activity. This chain is Dual specificity protein phosphatase 26 (DUSP26), found in Bos taurus (Bovine).